The following is a 911-amino-acid chain: Leucine--tRNA ligase (911 aa).

The 'HIGH' region signature appears at 42 to 52 (PYPSGKLHMGH). The 'KMSKS' region signature appears at 659 to 663 (TMSKS). Lys-662 is an ATP binding site.

It belongs to the class-I aminoacyl-tRNA synthetase family.

It is found in the cytoplasm. It carries out the reaction tRNA(Leu) + L-leucine + ATP = L-leucyl-tRNA(Leu) + AMP + diphosphate. The sequence is that of Leucine--tRNA ligase from Delftia acidovorans (strain DSM 14801 / SPH-1).